Consider the following 159-residue polypeptide: Transmembrane protein 42 (159 aa).

The next 4 membrane-spanning stretches (helical) occupy residues 37-57 (FWGVFNCLCAGSFGALAAASA), 59-79 (LAFGSEVSMGLCVLGIIVMAS), 100-120 (IASVTVTFSNILSSAFLGYVL), and 124-144 (CQEVLWWGGVFLILCGLTLIH).

Its subcellular location is the membrane. The protein is Transmembrane protein 42 (TMEM42) of Pongo abelii (Sumatran orangutan).